A 118-amino-acid polypeptide reads, in one-letter code: Ribosome-binding factor A (118 aa).

It belongs to the RbfA family. In terms of assembly, monomer. Binds 30S ribosomal subunits, but not 50S ribosomal subunits or 70S ribosomes.

It is found in the cytoplasm. Its function is as follows. One of several proteins that assist in the late maturation steps of the functional core of the 30S ribosomal subunit. Associates with free 30S ribosomal subunits (but not with 30S subunits that are part of 70S ribosomes or polysomes). Required for efficient processing of 16S rRNA. May interact with the 5'-terminal helix region of 16S rRNA. The protein is Ribosome-binding factor A of Bacillus cereus (strain B4264).